Reading from the N-terminus, the 230-residue chain is Ion-translocating oxidoreductase complex subunit E (230 aa).

5 helical membrane-spanning segments follow: residues leucine 39–isoleucine 59, isoleucine 69–alanine 89, glycine 93–glycine 113, leucine 125–leucine 145, and serine 182–leucine 202.

Belongs to the NqrDE/RnfAE family. In terms of assembly, the complex is composed of six subunits: RnfA, RnfB, RnfC, RnfD, RnfE and RnfG.

The protein localises to the cell inner membrane. Its function is as follows. Part of a membrane-bound complex that couples electron transfer with translocation of ions across the membrane. The polypeptide is Ion-translocating oxidoreductase complex subunit E (Vibrio vulnificus (strain YJ016)).